The chain runs to 321 residues: L-carnitine dehydrogenase (321 aa).

Residue 7 to 12 (GTGVIG) coordinates NAD(+).

The protein belongs to the 3-hydroxyacyl-CoA dehydrogenase family. L-carnitine dehydrogenase subfamily. In terms of assembly, homodimer.

It localises to the cytoplasm. It carries out the reaction carnitine + NAD(+) = 3-dehydrocarnitine + NADH + H(+). The protein operates within amine and polyamine metabolism; carnitine metabolism. Its function is as follows. Catalyzes the NAD(+)-dependent oxidation of L-carnitine to 3-dehydrocarnitine. This chain is L-carnitine dehydrogenase, found in Staphylococcus epidermidis (strain ATCC 12228 / FDA PCI 1200).